The chain runs to 299 residues: Lysine exporter LysO (299 aa).

The next 8 helical transmembrane spans lie at 1–21 (MFSGLLIILVPLIVGYLIPLR), 31–51 (QLLSWMVYLILFFMGISLAFL), 58–78 (LLAILHYSAVSITVILLCNIA), 109–129 (LKLCGVVVIGFAIGLSGLAFL), 131–151 (HATEASEYTLILLLFLVGIQL), 169–189 (IVAVVVVVSSLIGGLINAFIL), 207–227 (SLSGILLTESFGPVIGSAAFF), and 277–297 (PAAIVHGFILSLLVPILIAFF).

The protein belongs to the LysO family.

It localises to the cell inner membrane. Mediates export of lysine. The chain is Lysine exporter LysO from Escherichia coli (strain K12).